A 120-amino-acid polypeptide reads, in one-letter code: UPF0102 protein COXBURSA331_A1934 (120 aa).

It belongs to the UPF0102 family.

The chain is UPF0102 protein COXBURSA331_A1934 from Coxiella burnetii (strain RSA 331 / Henzerling II).